We begin with the raw amino-acid sequence, 178 residues long: CDP-diacylglycerol--glycerol-3-phosphate 3-phosphatidyltransferase (178 aa).

4 helical membrane-spanning segments follow: residues 5–25 (PNYLTIARIMVIPVIILLFYI), 32–52 (KLGALLFVLASITDFFDGYIA), 61–81 (FGKMFDPIADKLLVGCVTIML), and 145–165 (IIYLDIVGEIILWIAAFLTII).

This sequence belongs to the CDP-alcohol phosphatidyltransferase class-I family.

Its subcellular location is the cell membrane. It catalyses the reaction a CDP-1,2-diacyl-sn-glycerol + sn-glycerol 3-phosphate = a 1,2-diacyl-sn-glycero-3-phospho-(1'-sn-glycero-3'-phosphate) + CMP + H(+). The protein operates within phospholipid metabolism; phosphatidylglycerol biosynthesis; phosphatidylglycerol from CDP-diacylglycerol: step 1/2. This protein catalyzes the committed step to the synthesis of the acidic phospholipids. In Rickettsia typhi (strain ATCC VR-144 / Wilmington), this protein is CDP-diacylglycerol--glycerol-3-phosphate 3-phosphatidyltransferase (pgsA).